Consider the following 73-residue polypeptide: UPF0499 protein CHGG_06021 (73 aa).

An N-terminal signal peptide occupies residues 1–20 (MKSSIHVVLFFLLSLVASMA). Disulfide bonds link cysteine 41–cysteine 55, cysteine 48–cysteine 60, and cysteine 54–cysteine 69.

Belongs to the UPF0499 family.

The protein resides in the secreted. The sequence is that of UPF0499 protein CHGG_06021 from Chaetomium globosum (strain ATCC 6205 / CBS 148.51 / DSM 1962 / NBRC 6347 / NRRL 1970) (Soil fungus).